The following is a 270-amino-acid chain: ATP synthase subunit a 1 (270 aa).

A run of 5 helical transmembrane segments spans residues 38-58 (VHID…GIFY), 98-118 (IAPL…MDLV), 143-163 (DVNI…YYSI), 208-228 (LFGN…MLPW), and 239-259 (AIFH…LTIV).

The protein belongs to the ATPase A chain family. F-type ATPases have 2 components, CF(1) - the catalytic core - and CF(0) - the membrane proton channel. CF(1) has five subunits: alpha(3), beta(3), gamma(1), delta(1), epsilon(1). CF(0) has three main subunits: a(1), b(2) and c(9-12). The alpha and beta chains form an alternating ring which encloses part of the gamma chain. CF(1) is attached to CF(0) by a central stalk formed by the gamma and epsilon chains, while a peripheral stalk is formed by the delta and b chains.

The protein resides in the cell inner membrane. Its function is as follows. Key component of the proton channel; it plays a direct role in the translocation of protons across the membrane. The protein is ATP synthase subunit a 1 of Vibrio campbellii (strain ATCC BAA-1116).